A 592-amino-acid polypeptide reads, in one-letter code: Potassium-transporting ATPase potassium-binding subunit (592 aa).

A run of 13 helical transmembrane segments spans residues 6-26, 67-87, 136-156, 179-199, 283-303, 312-332, 359-379, 389-409, 411-431, 450-470, 489-511, 519-539, and 559-579; these read WLET…FGTY, ACAM…MLLL, GFAV…IAAI, LYIL…QGVI, LSNI…TYTF, QGWA…GVFY, FGLA…CGAV, IGGM…GGVG, GLYT…LMIG, ITTV…AMIL, LYAF…GNTL, VAML…AGGL, and FALW…FPAL.

It belongs to the KdpA family. As to quaternary structure, the system is composed of three essential subunits: KdpA, KdpB and KdpC.

It localises to the cell inner membrane. Its function is as follows. Part of the high-affinity ATP-driven potassium transport (or Kdp) system, which catalyzes the hydrolysis of ATP coupled with the electrogenic transport of potassium into the cytoplasm. This subunit binds the periplasmic potassium ions and delivers the ions to the membrane domain of KdpB through an intramembrane tunnel. The protein is Potassium-transporting ATPase potassium-binding subunit of Geotalea uraniireducens (strain Rf4) (Geobacter uraniireducens).